Here is a 332-residue protein sequence, read N- to C-terminus: Abl interactor homolog (332 aa).

Residues 73-104 are a coiled coil; the sequence is HITSLLQLQTNEMEKLNIEIQTLTQRVRMIHD. Residues 152 to 332 form a disordered region; sequence SDINQNGVPP…NDFPPPPPPM (181 aa). The span at 164–206 shows a compositional bias: low complexity; it reads NHSNSSANLTSSSGHLAASSTSNSSTPSYQSPSYSSQPTISSG. Residues 221–247 are compositionally biased toward pro residues; sequence APPPPSLSVPAAPPPPVMNVPPPPPTS. Residues 248 to 257 show a composition bias toward polar residues; the sequence is QRPSSVNNNA. Pro residues predominate over residues 277–314; it reads LPPPPSFGLPPPPTLGDDFPPPPPPPVGSYDFPPPPAR.

It belongs to the ABI family. As to quaternary structure, part of a Scar/WAVE complex containing brk1, scrA, abiA, pirA and napA. Interacts with scrA.

In terms of biological role, involved in regulation of actin and microtubule organization. Required for proper cytokinesis. The sequence is that of Abl interactor homolog (abiA) from Dictyostelium discoideum (Social amoeba).